We begin with the raw amino-acid sequence, 456 residues long: Phosphomethylpyrimidine synthase (456 aa).

Substrate is bound by residues Asn-80, Met-109, Tyr-139, His-175, 195–197 (SRG), 236–239 (DSLR), and Glu-275. His-279 is a binding site for Zn(2+). Tyr-302 lines the substrate pocket. A Zn(2+)-binding site is contributed by His-343. [4Fe-4S] cluster contacts are provided by Cys-423, Cys-426, and Cys-431.

The protein belongs to the ThiC family. [4Fe-4S] cluster serves as cofactor.

The catalysed reaction is 5-amino-1-(5-phospho-beta-D-ribosyl)imidazole + S-adenosyl-L-methionine = 4-amino-2-methyl-5-(phosphooxymethyl)pyrimidine + CO + 5'-deoxyadenosine + formate + L-methionine + 3 H(+). It participates in cofactor biosynthesis; thiamine diphosphate biosynthesis. In terms of biological role, catalyzes the synthesis of the hydroxymethylpyrimidine phosphate (HMP-P) moiety of thiamine from aminoimidazole ribotide (AIR) in a radical S-adenosyl-L-methionine (SAM)-dependent reaction. In Prochlorococcus marinus (strain MIT 9301), this protein is Phosphomethylpyrimidine synthase.